Consider the following 342-residue polypeptide: uncharacterized protein (342 aa).

It belongs to the cycloisomerase 2 family.

This is an uncharacterized protein from Staphylococcus aureus (strain N315).